The chain runs to 49 residues: Large ribosomal subunit protein bL33 (49 aa).

Belongs to the bacterial ribosomal protein bL33 family.

The sequence is that of Large ribosomal subunit protein bL33 from Desulforudis audaxviator (strain MP104C).